We begin with the raw amino-acid sequence, 431 residues long: 4-hydroxy-3-methylbut-2-en-1-yl diphosphate synthase (flavodoxin) (431 aa).

Positions 1–21 (MNKLENPSQRDVAGPSPRHKT) are disordered. Residues Cys-310, Cys-313, Cys-356, and Glu-363 each contribute to the [4Fe-4S] cluster site.

It belongs to the IspG family. [4Fe-4S] cluster is required as a cofactor.

The catalysed reaction is (2E)-4-hydroxy-3-methylbut-2-enyl diphosphate + oxidized [flavodoxin] + H2O + 2 H(+) = 2-C-methyl-D-erythritol 2,4-cyclic diphosphate + reduced [flavodoxin]. It participates in isoprenoid biosynthesis; isopentenyl diphosphate biosynthesis via DXP pathway; isopentenyl diphosphate from 1-deoxy-D-xylulose 5-phosphate: step 5/6. In terms of biological role, converts 2C-methyl-D-erythritol 2,4-cyclodiphosphate (ME-2,4cPP) into 1-hydroxy-2-methyl-2-(E)-butenyl 4-diphosphate. This chain is 4-hydroxy-3-methylbut-2-en-1-yl diphosphate synthase (flavodoxin), found in Nitrobacter hamburgensis (strain DSM 10229 / NCIMB 13809 / X14).